A 404-amino-acid polypeptide reads, in one-letter code: Probable tRNA sulfurtransferase (404 aa).

Positions 60–165 (QPIVEALKLV…DEAAYISYEE (106 aa)) constitute a THUMP domain. ATP-binding positions include 183-184 (ML), 208-209 (HF), arginine 265, glycine 287, and glutamine 296.

This sequence belongs to the ThiI family.

It is found in the cytoplasm. The enzyme catalyses [ThiI sulfur-carrier protein]-S-sulfanyl-L-cysteine + a uridine in tRNA + 2 reduced [2Fe-2S]-[ferredoxin] + ATP + H(+) = [ThiI sulfur-carrier protein]-L-cysteine + a 4-thiouridine in tRNA + 2 oxidized [2Fe-2S]-[ferredoxin] + AMP + diphosphate. The catalysed reaction is [ThiS sulfur-carrier protein]-C-terminal Gly-Gly-AMP + S-sulfanyl-L-cysteinyl-[cysteine desulfurase] + AH2 = [ThiS sulfur-carrier protein]-C-terminal-Gly-aminoethanethioate + L-cysteinyl-[cysteine desulfurase] + A + AMP + 2 H(+). The protein operates within cofactor biosynthesis; thiamine diphosphate biosynthesis. Its function is as follows. Catalyzes the ATP-dependent transfer of a sulfur to tRNA to produce 4-thiouridine in position 8 of tRNAs, which functions as a near-UV photosensor. Also catalyzes the transfer of sulfur to the sulfur carrier protein ThiS, forming ThiS-thiocarboxylate. This is a step in the synthesis of thiazole, in the thiamine biosynthesis pathway. The sulfur is donated as persulfide by IscS. In Streptococcus pyogenes serotype M4 (strain MGAS10750), this protein is Probable tRNA sulfurtransferase.